The following is a 137-amino-acid chain: MARVTVEDCIDKVENRFELVLLAGHRARLLSSGAPLTVDRDRDKNPVVALREIADETITPDDLKEQLIHSLQKYVEVDEPEPEAVPLLSSSPAAAAVAPQAASGDDNDIQFDRMSEEDLLRGLENLAPPTETEDEGD.

The tract at residues 78–137 (DEPEPEAVPLLSSSPAAAAVAPQAASGDDNDIQFDRMSEEDLLRGLENLAPPTETEDEGD) is disordered. Low complexity predominate over residues 84-103 (AVPLLSSSPAAAAVAPQAAS). The segment covering 110–121 (QFDRMSEEDLLR) has biased composition (basic and acidic residues).

The protein belongs to the RNA polymerase subunit omega family. In terms of assembly, the RNAP catalytic core consists of 2 alpha, 1 beta, 1 beta' and 1 omega subunit. When a sigma factor is associated with the core the holoenzyme is formed, which can initiate transcription.

It carries out the reaction RNA(n) + a ribonucleoside 5'-triphosphate = RNA(n+1) + diphosphate. In terms of biological role, promotes RNA polymerase assembly. Latches the N- and C-terminal regions of the beta' subunit thereby facilitating its interaction with the beta and alpha subunits. This chain is DNA-directed RNA polymerase subunit omega, found in Methylobacterium sp. (strain 4-46).